We begin with the raw amino-acid sequence, 63 residues long: ATPase inhibitor, mitochondrial (63 aa).

Positions 1 to 23 (TAGATGATRQDGSTDAFEKREKA) are disordered. Residues 18–62 (EKREKAQEDLYIRQHEKEQLEALKESLKKQKKSLDDLEBKIDDLT) are a coiled coil.

It belongs to the ATPase inhibitor family.

It is found in the mitochondrion. In terms of biological role, this protein forms a one-to-one complex with ATPase to inhibit the enzyme activity completely. The protein is ATPase inhibitor, mitochondrial of Cyberlindnera jadinii (Torula yeast).